We begin with the raw amino-acid sequence, 813 residues long: Ankyrin repeat domain-containing protein SOWAHB (813 aa).

Disordered regions lie at residues 142-256 (SAAP…QSLS) and 400-436 (ETCG…DSHK). Over residues 158-176 (MSEKARVNPSHWDTKRYYP) the composition is skewed to basic and acidic residues. Over residues 177 to 189 (EDPPVPDSLPVSP) the composition is skewed to pro residues. Positions 191-202 (CTNTRQSSFTST) are enriched in polar residues. The span at 208 to 244 (HSLSSNNLSSSFSSPESPGLVAKPYNASPSPAGSSPN) shows a compositional bias: low complexity. Residues 245–256 (IREQTPKSQSLS) are compositionally biased toward polar residues. Over residues 400-416 (ETCGSEESDSGEGGDCD) the composition is skewed to acidic residues. 2 ANK repeats span residues 657–686 (TGYT…KAGI) and 696–726 (NGYT…NVKV).

Belongs to the SOWAH family.

The protein is Ankyrin repeat domain-containing protein SOWAHB (sowahb) of Xenopus laevis (African clawed frog).